The primary structure comprises 295 residues: Small ribosomal subunit protein uS2 (295 aa).

The interval 273–295 is disordered; that stretch reads WAASSAPAAETLADPAADPSVKW. Over residues 274–295 the composition is skewed to low complexity; it reads AASSAPAAETLADPAADPSVKW.

This sequence belongs to the universal ribosomal protein uS2 family. Component of the small ribosomal subunit. Mature ribosomes consist of a small (40S) and a large (60S) subunit. The 40S subunit contains about 33 different proteins and 1 molecule of RNA (18S). The 60S subunit contains about 49 different proteins and 3 molecules of RNA (25S, 5.8S and 5S). Interacts with RPS21.

The protein localises to the cytoplasm. In terms of biological role, required for the assembly and/or stability of the 40S ribosomal subunit. Required for the processing of the 20S rRNA-precursor to mature 18S rRNA in a late step of the maturation of 40S ribosomal subunits. The chain is Small ribosomal subunit protein uS2 from Paracoccidioides lutzii (strain ATCC MYA-826 / Pb01) (Paracoccidioides brasiliensis).